The following is a 356-amino-acid chain: Methionine import ATP-binding protein MetN (356 aa).

The region spanning 7-250 (IKLDNIDVTF…PRESLTQDFI (244 aa)) is the ABC transporter domain. An ATP-binding site is contributed by 43 to 50 (GYSGAGKS).

This sequence belongs to the ABC transporter superfamily. Methionine importer (TC 3.A.1.24) family. In terms of assembly, the complex is composed of two ATP-binding proteins (MetN), two transmembrane proteins (MetI) and a solute-binding protein (MetQ).

The protein resides in the cell membrane. The enzyme catalyses L-methionine(out) + ATP + H2O = L-methionine(in) + ADP + phosphate + H(+). The catalysed reaction is D-methionine(out) + ATP + H2O = D-methionine(in) + ADP + phosphate + H(+). Part of the ABC transporter complex MetNIQ involved in methionine import. Responsible for energy coupling to the transport system. This Streptococcus agalactiae serotype Ia (strain ATCC 27591 / A909 / CDC SS700) protein is Methionine import ATP-binding protein MetN.